Consider the following 219-residue polypeptide: Histone H1.4 (219 aa).

Over residues 1-15 (MSETAPAAPAAPAPA) the composition is skewed to low complexity. Positions 1 to 41 (MSETAPAAPAAPAPAEKTPVKKKARKSAGAAKRKASGPPVS) are disordered. N-acetylserine is present on S2. S2 bears the Phosphoserine mark. At K17 the chain carries N6-acetyllysine. T18 is modified (phosphothreonine). Positions 20–35 (VKKKARKSAGAAKRKA) are enriched in basic residues. Residue K26 is modified to N6-acetyllysine; alternate. At K26 the chain carries N6-methyllysine; alternate. K34 is subject to N6-(beta-hydroxybutyryl)lysine; alternate. The residue at position 34 (K34) is an N6-succinyllysine; alternate. A Phosphoserine modification is found at S36. Residues 36–109 (SGPPVSELIT…GASGSFKLNK (74 aa)) enclose the H15 domain. K52 bears the N6-(beta-hydroxybutyryl)lysine mark. R54 bears the Citrulline mark. N6-(beta-hydroxybutyryl)lysine occurs at positions 64, 85, 90, and 106. The tract at residues 92 to 219 (TLVQTKGTGA…KPKKAAAKKK (128 aa)) is disordered. Basic residues predominate over residues 119–140 (KAKKAGAAKAKKPAGAAKKPKK). T146 bears the Phosphothreonine mark. Composition is skewed to basic residues over residues 149-160 (KSAKKTPKKAKK) and 168-185 (KKAKSPKKAKAAKPKKAP). S150 is subject to ADP-ribosylserine. At S187 the chain carries Phosphoserine. A compositionally biased stretch (basic residues) spans 192–219 (KAVKPKAAKPKTAKPKAAKPKKAAAKKK).

The protein belongs to the histone H1/H5 family. Post-translationally, H1 histones are progressively phosphorylated during the cell cycle, becoming maximally phosphorylated during late G2 phase and M phase, and being dephosphorylated sharply thereafter. Acetylated at Lys-26. Deacetylated at Lys-26 by SIRT1. In terms of processing, citrullination at Arg-54 (H1R54ci) by PADI4 takes place within the DNA-binding site of H1 and results in its displacement from chromatin and global chromatin decondensation, thereby promoting pluripotency and stem cell maintenance. Post-translationally, ADP-ribosylated on Ser-150 in response to DNA damage.

The protein localises to the nucleus. It is found in the chromosome. Histone H1 protein binds to linker DNA between nucleosomes forming the macromolecular structure known as the chromatin fiber. Histones H1 are necessary for the condensation of nucleosome chains into higher-order structured fibers. Also acts as a regulator of individual gene transcription through chromatin remodeling, nucleosome spacing and DNA methylation. The polypeptide is Histone H1.4 (Homo sapiens (Human)).